The following is a 288-amino-acid chain: ATP synthase gamma chain (288 aa).

It belongs to the ATPase gamma chain family. In terms of assembly, F-type ATPases have 2 components, CF(1) - the catalytic core - and CF(0) - the membrane proton channel. CF(1) has five subunits: alpha(3), beta(3), gamma(1), delta(1), epsilon(1). CF(0) has three main subunits: a, b and c.

The protein localises to the cell inner membrane. Functionally, produces ATP from ADP in the presence of a proton gradient across the membrane. The gamma chain is believed to be important in regulating ATPase activity and the flow of protons through the CF(0) complex. The polypeptide is ATP synthase gamma chain (Trichlorobacter lovleyi (strain ATCC BAA-1151 / DSM 17278 / SZ) (Geobacter lovleyi)).